We begin with the raw amino-acid sequence, 345 residues long: UPF0284 protein STK_21430 (345 aa).

The protein belongs to the UPF0284 family.

The sequence is that of UPF0284 protein STK_21430 from Sulfurisphaera tokodaii (strain DSM 16993 / JCM 10545 / NBRC 100140 / 7) (Sulfolobus tokodaii).